A 285-amino-acid polypeptide reads, in one-letter code: 2-dehydro-3-deoxyphosphooctonate aldolase (285 aa).

It belongs to the KdsA family.

It localises to the cytoplasm. The catalysed reaction is D-arabinose 5-phosphate + phosphoenolpyruvate + H2O = 3-deoxy-alpha-D-manno-2-octulosonate-8-phosphate + phosphate. It functions in the pathway carbohydrate biosynthesis; 3-deoxy-D-manno-octulosonate biosynthesis; 3-deoxy-D-manno-octulosonate from D-ribulose 5-phosphate: step 2/3. It participates in bacterial outer membrane biogenesis; lipopolysaccharide biosynthesis. This is 2-dehydro-3-deoxyphosphooctonate aldolase from Acinetobacter baumannii (strain AB307-0294).